Reading from the N-terminus, the 211-residue chain is MCPGNWLWASMTFMARFSRSSSRSPVRTRGNLEEMPTVQHPFLNVFELERLLYTGKTACNHADEVWPGLYLGDQDMANNRRELRRLGITHVLNASHSRWRGTPEAYEGLGIRYLGVEAHDSPAFDMSIHFQTAADFIHRALSQPGGKILVHCAVGVSRSATLVLAYLMLYHHLTLVEAIKKVKDHRGIIPNRGFLRQLLALDRRLRQGLEA.

Residues 60 to 207 (NHADEVWPGL…LLALDRRLRQ (148 aa)) form the Tyrosine-protein phosphatase domain. The active-site Phosphocysteine intermediate is cysteine 152.

It belongs to the protein-tyrosine phosphatase family. Non-receptor class dual specificity subfamily. In terms of assembly, interacts with HSF4.

Its subcellular location is the cytoplasm. It localises to the nucleus. It is found in the golgi apparatus. It carries out the reaction O-phospho-L-tyrosyl-[protein] + H2O = L-tyrosyl-[protein] + phosphate. The catalysed reaction is O-phospho-L-seryl-[protein] + H2O = L-seryl-[protein] + phosphate. It catalyses the reaction O-phospho-L-threonyl-[protein] + H2O = L-threonyl-[protein] + phosphate. Functionally, inactivates MAPK1 and MAPK3 which leads to dephosphorylation of heat shock factor protein 4 and a reduction in its DNA-binding activity. The polypeptide is Dual specificity protein phosphatase 26 (DUSP26) (Pongo abelii (Sumatran orangutan)).